The chain runs to 649 residues: Acetyl-coenzyme A synthetase (649 aa).

CoA contacts are provided by residues 191 to 194 (RGGR), Thr309, and Asn333. ATP is bound by residues 385–387 (GEP), 409–414 (DTWWQT), Asp498, and Arg513. Ser521 lines the CoA pocket. Arg524 contributes to the ATP binding site. Mg(2+)-binding residues include Val535, His537, and Val540. Arg582 is a binding site for CoA. The residue at position 607 (Lys607) is an N6-acetyllysine.

Belongs to the ATP-dependent AMP-binding enzyme family. Requires Mg(2+) as cofactor. Post-translationally, acetylated. Deacetylation by the SIR2-homolog deacetylase activates the enzyme.

The enzyme catalyses acetate + ATP + CoA = acetyl-CoA + AMP + diphosphate. Functionally, catalyzes the conversion of acetate into acetyl-CoA (AcCoA), an essential intermediate at the junction of anabolic and catabolic pathways. AcsA undergoes a two-step reaction. In the first half reaction, AcsA combines acetate with ATP to form acetyl-adenylate (AcAMP) intermediate. In the second half reaction, it can then transfer the acetyl group from AcAMP to the sulfhydryl group of CoA, forming the product AcCoA. This is Acetyl-coenzyme A synthetase from Novosphingobium aromaticivorans (strain ATCC 700278 / DSM 12444 / CCUG 56034 / CIP 105152 / NBRC 16084 / F199).